Consider the following 961-residue polypeptide: Roundabout homolog 4 (961 aa).

The first 37 residues, 1–37, serve as a signal peptide directing secretion; the sequence is MGQGEELRAAVDSGGMGLLGTKCPLPLLLLFIMGGKA. Ig-like C2-type domains are found at residues 42–142 and 148–235; these read PQIL…ARLS and EDFR…ARVS. 2 cysteine pairs are disulfide-bonded: Cys-63–Cys-125 and Cys-169–Cys-218. N-linked (GlcNAc...) asparagine glycans are attached at residues Asn-211 and Asn-257. 2 consecutive Fibronectin type-III domains span residues 259-356 and 358-453; these read TLLN…LPEQ and PSAP…LEQA. Residues Asn-371, Asn-400, and Asn-407 are each glycosylated (N-linked (GlcNAc...) asparagine). Positions 544–559 are enriched in low complexity; the sequence is SGSRDLSSSSSLSSRL. Disordered regions lie at residues 544-563 and 600-634; these read SGSR…GVDP and QTSS…SSDS. The span at 623-634 shows a compositional bias: polar residues; it reads TGTSSPWASSDS. 2 N-linked (GlcNAc...) asparagine glycosylation sites follow: Asn-691 and Asn-723. Residues 726–810 form a disordered region; the sequence is ELAARPLPPT…SLEEEDQDSV (85 aa). A compositionally biased stretch (low complexity) spans 755–769; sequence LQAPSSDPLPAAPLS. A compositionally biased stretch (polar residues) spans 770-783; that stretch reads VLNSSRPSSPQASF. Asn-772 and Asn-793 each carry an N-linked (GlcNAc...) asparagine glycan. Low complexity predominate over residues 784–801; that stretch reads LSVPSPGSSNLSSSSLSS. Ser-823 carries the phosphoserine modification.

This sequence belongs to the immunoglobulin superfamily. ROBO family. Interacts with SLIT2 and ENAH.

In terms of biological role, receptor for Slit proteins, at least for SLIT2, and seems to be involved in angiogenesis and vascular patterning. May mediate the inhibition of primary endothelial cell migration by Slit proteins. Involved in the maintenance of endothelial barrier organization and function. The polypeptide is Roundabout homolog 4 (Robo4) (Rattus norvegicus (Rat)).